The primary structure comprises 57 residues: UPF0391 membrane protein Xaut_1725 (57 aa).

2 helical membrane-spanning segments follow: residues Trp4–Ala24 and Ile30–Leu50.

This sequence belongs to the UPF0391 family.

The protein localises to the cell membrane. The chain is UPF0391 membrane protein Xaut_1725 from Xanthobacter autotrophicus (strain ATCC BAA-1158 / Py2).